A 469-amino-acid chain; its full sequence is Zinc transporter SLC39A7 (469 aa).

A helical membrane pass occupies residues 10–30 (WVAVGLLTWATLGLLVAGLGG). Composition is skewed to basic and acidic residues over residues 42 to 56 (FHGH…DFHH) and 66 to 114 (HTHE…EHSH). A disordered region spans residues 42–121 (FHGHSHRHSH…HSHGGYGESG (80 aa)). H66 is subject to Pros-methylhistidine. 3 helical membrane passes run 138–158 (ALGA…LIPV), 169–189 (LQIL…LHLI), and 214–234 (GPIL…LVVE). A compositionally biased stretch (basic residues) spans 242–263 (GGHGHSHGHGHAHSHTRGSHGH). A disordered region spans residues 242 to 310 (GGHGHSHGHG…VRPQNAEEEK (69 aa)). Residues 264-285 (GRQERSTKEKQSSEEEEKETRG) show a composition bias toward basic and acidic residues. A phosphoserine; by CK2 mark is found at S275 and S276. Helical transmembrane passes span 381–401 (MRLQ…ALLT) and 417–436 (GWVL…VSVL).

This sequence belongs to the ZIP transporter (TC 2.A.5) family. KE4/Catsup subfamily. As to quaternary structure, homodimer. Post-translationally, rapidly phosphorylated by CK2 following Zn(2+) treatment. This phosphorylation is required for efficient cytosolic Zn(2+) release. Methylation at some His residue by METTL9 leads to reduced zinc-binding. Widely expressed.

Its subcellular location is the endoplasmic reticulum membrane. The protein resides in the golgi apparatus. It is found in the cis-Golgi network membrane. The catalysed reaction is Zn(2+)(in) = Zn(2+)(out). Its activity is regulated as follows. Phosphorylation activates zinc transport activity. Transports Zn(2+) from the endoplasmic reticulum (ER)/Golgi apparatus to the cytosol, playing an essential role in the regulation of cytosolic zinc levels. Acts as a gatekeeper of zinc release from intracellular stores, requiring post-translational activation by phosphorylation, resulting in activation of multiple downstream pathways leading to cell growth and proliferation. Has an essential role in B cell development and is required for proper B cell receptor signaling. Plays an important role in maintaining intestinal epithelial homeostasis and skin dermis development by regulating ER function. Controls cell signaling pathways involved in glucose metabolism in skeletal muscle. Has a protective role against ER stress in different biological contexts. Mediates Zn(2+)-induced ferroptosis. The polypeptide is Zinc transporter SLC39A7 (SLC39A7) (Homo sapiens (Human)).